Reading from the N-terminus, the 256-residue chain is Small ribosomal subunit protein eS1 (256 aa).

Residue A2 is modified to N-acetylalanine; partial.

Belongs to the eukaryotic ribosomal protein eS1 family. In terms of assembly, component of the small ribosomal subunit. Mature ribosomes consist of a small (40S) and a large (60S) subunit. The 40S subunit contains about 33 different proteins and 1 molecule of RNA (18S). The 60S subunit contains about 49 different proteins and 3 molecules of RNA (25S, 5.8S and 5S).

The protein resides in the cytoplasm. In Komagataella phaffii (strain GS115 / ATCC 20864) (Yeast), this protein is Small ribosomal subunit protein eS1.